A 179-amino-acid chain; its full sequence is MSLKDRFDRFIDYFTEDEDSSLPYEKRDEPVFTSVNSSQEPALPMNQPSQSAGTKENNITRLHARQQELANQSQRATDKVIIDVRYPRKYEDATEIVDLLAGNESILIDFQYMTEVQARRCLDYLDGACHVLAGNLKKVASTMYLLTPVNVIVNVEDIRLPDEDQQGEFGFDMKRNRVR.

Residues 22–55 are disordered; the sequence is LPYEKRDEPVFTSVNSSQEPALPMNQPSQSAGTK. Residues 33-55 are compositionally biased toward polar residues; that stretch reads TSVNSSQEPALPMNQPSQSAGTK.

It belongs to the SepF family. Homodimer. Interacts with FtsZ.

It localises to the cytoplasm. Its function is as follows. Cell division protein that is part of the divisome complex and is recruited early to the Z-ring. Probably stimulates Z-ring formation, perhaps through the cross-linking of FtsZ protofilaments. Its function overlaps with FtsA. This chain is Cell division protein SepF, found in Streptococcus pneumoniae (strain Taiwan19F-14).